The following is a 340-amino-acid chain: Phosphate acyltransferase (340 aa).

The protein belongs to the PlsX family. Homodimer. Probably interacts with PlsY.

The protein resides in the cytoplasm. It catalyses the reaction a fatty acyl-[ACP] + phosphate = an acyl phosphate + holo-[ACP]. It participates in lipid metabolism; phospholipid metabolism. In terms of biological role, catalyzes the reversible formation of acyl-phosphate (acyl-PO(4)) from acyl-[acyl-carrier-protein] (acyl-ACP). This enzyme utilizes acyl-ACP as fatty acyl donor, but not acyl-CoA. The chain is Phosphate acyltransferase from Helicobacter pylori (strain HPAG1).